Consider the following 140-residue polypeptide: Low calcium response locus protein T (140 aa).

The chain is Low calcium response locus protein T (lcrT) from Yersinia pseudotuberculosis serotype I (strain IP32953).